The chain runs to 855 residues: Receptor-like protein kinase THESEUS 1 (855 aa).

The first 22 residues, 1–22, serve as a signal peptide directing secretion; it reads MVFTKSLLVLLWFLSCYTTTTS. Topologically, residues 23 to 415 are extracellular; sequence SALFNPPDNY…GGSGSKSKKK (393 aa). 14 N-linked (GlcNAc...) asparagine glycosylation sites follow: N41, N64, N75, N114, N118, N136, N143, N154, N168, N225, N242, N288, N353, and N376. The chain crosses the membrane as a helical span at residues 416 to 436; it reads AVIIGSLVGAVTLILLIAVCC. The Cytoplasmic portion of the chain corresponds to 437 to 855; it reads YCCLVASRKQ…FSQLVHPRGR (419 aa). Residues 510-783 form the Protein kinase domain; that stretch reads FDESSLLGVG…GDVLWNLEYA (274 aa). ATP is bound by residues 516-524 and K538; that span reads LGVGGFGRV. D634 acts as the Proton acceptor in catalysis. Residues 822–855 are disordered; the sequence is IDRGGVNSGTGTDDDAEDATTSAVFSQLVHPRGR.

It belongs to the protein kinase superfamily. Ser/Thr protein kinase family. Post-translationally, autophosphorylated. As to expression, expressed in most vegetative tissues, including leaves, stems and roots, primarily in expanding cells and vascular tissue.

It is found in the cell membrane. Its function is as follows. Receptor-like protein kinase required for cell elongation during vegetative growth, mostly in a brassinosteroid-(BR-) independent manner. Mediates the response of growing plant cells to the perturbation of cellulose synthesis and may act as a cell-wall-integrity sensor. Controls ectopic-lignin accumulation in cellulose-deficient mutant backgrounds. In Arabidopsis thaliana (Mouse-ear cress), this protein is Receptor-like protein kinase THESEUS 1 (THE1).